A 228-amino-acid chain; its full sequence is FtsZ-localized protein A (228 aa).

The 83-residue stretch at 3 to 85 folds into the GST N-terminal domain; that stretch reads VERTLHHFPL…HIEETETEPP (83 aa). The 134-residue stretch at 90–223 folds into the GST C-terminal domain; sequence DPAERAEARR…WPGLAPAAHY (134 aa).

This sequence belongs to the GST superfamily. Homodimer. Interacts with FtsZ filaments. Probably interacts with the GTPase domain of FtsZ.

Its subcellular location is the cytoplasm. Essential cell division protein that must bind to FtsZ for division to occur. Critical coordinator of envelope constriction through its interaction with FtsZ. Promotes the formation of highly curved FtsZ filaments, reduces the GTPase activity of FtsZ and stabilizes FtsZ polymers. May regulate FtsZ function by modulating its superstructure. Does not bind to glutathione. The chain is FtsZ-localized protein A from Caulobacter vibrioides (strain NA1000 / CB15N) (Caulobacter crescentus).